We begin with the raw amino-acid sequence, 152 residues long: UPF0179 protein Mlab_1307 (152 aa).

Belongs to the UPF0179 family.

In Methanocorpusculum labreanum (strain ATCC 43576 / DSM 4855 / Z), this protein is UPF0179 protein Mlab_1307.